The primary structure comprises 172 residues: Ribosome maturation factor RimM (172 aa).

In terms of domain architecture, PRC barrel spans 98 to 171 (PGEYYYHQIV…KVIVELMEGL (74 aa)).

Belongs to the RimM family. Binds ribosomal protein uS19.

Its subcellular location is the cytoplasm. Its function is as follows. An accessory protein needed during the final step in the assembly of 30S ribosomal subunit, possibly for assembly of the head region. Essential for efficient processing of 16S rRNA. May be needed both before and after RbfA during the maturation of 16S rRNA. It has affinity for free ribosomal 30S subunits but not for 70S ribosomes. This chain is Ribosome maturation factor RimM, found in Levilactobacillus brevis (strain ATCC 367 / BCRC 12310 / CIP 105137 / JCM 1170 / LMG 11437 / NCIMB 947 / NCTC 947) (Lactobacillus brevis).